The chain runs to 622 residues: Low affinity potassium transport system protein Kup (622 aa).

12 helical membrane-spanning segments follow: residues 9–29 (LPAV…TSPL), 52–72 (FLSL…LLFV), 99–119 (TPVL…EVVI), 137–157 (PSLQ…LFFI), 165–185 (VGKL…VLGV), 213–233 (VSFF…ALYA), 247–267 (WFSA…ALLL), 276–296 (PFFL…ATLA), 337–357 (IYIP…IVSF), 363–383 (LAAA…ILSC), 394–414 (LLIV…MFAA), and 419–439 (IFSG…AMIT).

Belongs to the HAK/KUP transporter (TC 2.A.72) family.

Its subcellular location is the cell inner membrane. It catalyses the reaction K(+)(in) + H(+)(in) = K(+)(out) + H(+)(out). Functionally, responsible for the low-affinity transport of potassium into the cell. Likely operates as a K(+):H(+) symporter. The chain is Low affinity potassium transport system protein Kup from Sodalis glossinidius (strain morsitans).